Here is a 491-residue protein sequence, read N- to C-terminus: Xaa-Pro aminopeptidase 1 (491 aa).

The segment at M1 to P32 is disordered. The Mn(2+) site is built by D308, D320, H403, E434, and E458.

Belongs to the peptidase M24B family. Homodimer. Requires Mn(2+) as cofactor.

It catalyses the reaction Release of any N-terminal amino acid, including proline, that is linked to proline, even from a dipeptide or tripeptide.. This chain is Xaa-Pro aminopeptidase 1 (pepPI), found in Streptomyces coelicolor (strain ATCC BAA-471 / A3(2) / M145).